A 262-amino-acid chain; its full sequence is tRNA (guanine-N(1)-)-methyltransferase (262 aa).

Residues Gly112 and 132–137 each bind S-adenosyl-L-methionine; that span reads IGDYIL.

The protein belongs to the RNA methyltransferase TrmD family. Homodimer.

The protein resides in the cytoplasm. It carries out the reaction guanosine(37) in tRNA + S-adenosyl-L-methionine = N(1)-methylguanosine(37) in tRNA + S-adenosyl-L-homocysteine + H(+). Its function is as follows. Specifically methylates guanosine-37 in various tRNAs. In Desulfatibacillum aliphaticivorans, this protein is tRNA (guanine-N(1)-)-methyltransferase.